The chain runs to 444 residues: Trigger factor (444 aa).

The 86-residue stretch at 163–248 folds into the PPIase FKBP-type domain; sequence GDFLTVDFVG…AKALKKAVAP (86 aa).

The protein belongs to the FKBP-type PPIase family. Tig subfamily.

It is found in the cytoplasm. The enzyme catalyses [protein]-peptidylproline (omega=180) = [protein]-peptidylproline (omega=0). Functionally, involved in protein export. Acts as a chaperone by maintaining the newly synthesized protein in an open conformation. Functions as a peptidyl-prolyl cis-trans isomerase. This is Trigger factor from Granulibacter bethesdensis (strain ATCC BAA-1260 / CGDNIH1).